The primary structure comprises 467 residues: Glutamate--tRNA ligase (467 aa).

Residues 9–19 carry the 'HIGH' region motif; sequence PSPTGFLHIGG. The short motif at 241–245 is the 'KMSKS' region element; it reads KLSKR. Residue Lys-244 coordinates ATP.

This sequence belongs to the class-I aminoacyl-tRNA synthetase family. Glutamate--tRNA ligase type 1 subfamily. Monomer.

Its subcellular location is the cytoplasm. It carries out the reaction tRNA(Glu) + L-glutamate + ATP = L-glutamyl-tRNA(Glu) + AMP + diphosphate. In terms of biological role, catalyzes the attachment of glutamate to tRNA(Glu) in a two-step reaction: glutamate is first activated by ATP to form Glu-AMP and then transferred to the acceptor end of tRNA(Glu). This chain is Glutamate--tRNA ligase, found in Methylobacillus flagellatus (strain ATCC 51484 / DSM 6875 / VKM B-1610 / KT).